Consider the following 263-residue polypeptide: MTDTPQNPTADLPIKVTARNVTVSYSGKQALHDVSIDIPDRSVTAFIGPSGCGKSTFLRCLNRMNDTIDGAVVGGSLTIDGQEINDKTIDPVVLRASVGMVFQKPNPFPKSIYDNVAYGPRIHGLALTRPELDEIVENALRKAGLWNEVSDRLNHPGTGLSGGQQQRLVIARAIAVNPEVILMDEPCSALDPIATARIEELIDELRENYCIIIVTHSMQQAARVSQHTAFFHMGNLVEYGPTEDIFTNPRDTRTQDYITGRFG.

In terms of domain architecture, ABC transporter spans 16–258; the sequence is VTARNVTVSY…PRDTRTQDYI (243 aa). 48–55 is a binding site for ATP; it reads GPSGCGKS.

It belongs to the ABC transporter superfamily. Phosphate importer (TC 3.A.1.7) family. In terms of assembly, the complex is composed of two ATP-binding proteins (PstB), two transmembrane proteins (PstC and PstA) and a solute-binding protein (PstS).

The protein resides in the cell inner membrane. It catalyses the reaction phosphate(out) + ATP + H2O = ADP + 2 phosphate(in) + H(+). In terms of biological role, part of the ABC transporter complex PstSACB involved in phosphate import. Responsible for energy coupling to the transport system. The polypeptide is Phosphate import ATP-binding protein PstB (Maricaulis maris (strain MCS10) (Caulobacter maris)).